The following is a 76-amino-acid chain: Rhesus theta defensin-1/2 subunit B (76 aa).

The first 22 residues, methionine 1 to alanine 22, serve as a signal peptide directing secretion. The propeptide occupies arginine 23–leucine 64. The interval alanine 25–alanine 54 is disordered. Residues alanine 30–alanine 44 show a composition bias toward low complexity. Residue arginine 65 forms a Cyclopeptide (Arg-Cys) (interchain with C-73 in subunit A); in form RTD-1 linkage. Arginine 65 is covalently cross-linked (Cyclopeptide (Arg-Cys) (interchain with C-73 in subunit B); in form RTD-2). An intrachain disulfide couples cysteine 68 to cysteine 73. Cysteine 73 is covalently cross-linked (Cyclopeptide (Cys-Arg) (interchain with R-65 in subunit A); in form RTD-1). A Cyclopeptide (Cys-Arg) (interchain with R-65 in subunit B); in form RTD-2 cross-link involves residue cysteine 73. Residues glutamine 74–leucine 76 constitute a propeptide that is removed on maturation.

The protein belongs to the alpha-defensin family. Theta subfamily. RTD-1 is a cyclic heterodimer composed of subunits A and B; disulfide-linked. RTD-2 is a cyclic homodimer composed of two subunits B; disulfide-linked. In terms of processing, forms a cyclic peptide with 1 subunit B (RTD-2) or with 1 subunit A (RTD-1). An additional intersubunit disulfide bond is formed. RTD-1 is expressed in bone marrow. Detected in promyelocytes, myelocytes and mature neutrophils and monocytes.

In terms of biological role, RTD-1 and RTD-2 have similar antimicrobial activities against the Gram-positive bacteria S.aureus 502A and L.monocytogenes, the Gram-negative bacterium S.typhimurium, and the fungi C.albicans 16820 and C.neoformans 271A. RTD-2 is 2-3-fold less active than RTD-1 against E.coli ML35. The chain is Rhesus theta defensin-1/2 subunit B (RTD1B) from Macaca mulatta (Rhesus macaque).